The sequence spans 674 residues: Putative kinase-like protein TMKL1 (674 aa).

The signal sequence occupies residues 1 to 25 (MGMEALRFLHVIFFFVLILHCHCGT). Residues 26 to 295 (SLSGSSDVKL…PLKPCLGSSR (270 aa)) are Extracellular-facing. N-linked (GlcNAc...) asparagine glycans are attached at residues Asn-57, Asn-90, Asn-95, and Asn-110. LRR repeat units follow at residues 100–122 (HLLS…IGEF), 124–146 (MLQS…LGYT), 148–169 (SLSD…SIWN), and 173–194 (KLVS…PALP). 2 N-linked (GlcNAc...) asparagine glycosylation sites follow: Asn-183 and Asn-195. LRR repeat units follow at residues 200-222 (NLQV…ITRF), 224-244 (GVKS…EGLG), and 247-269 (ELES…GESK). N-linked (GlcNAc...) asparagine glycans are attached at residues Asn-252 and Asn-257. The chain crosses the membrane as a helical span at residues 296-323 (LSPGAVAGLVIGLMSGAVVVASLLIGYL). The Cytoplasmic segment spans residues 324–674 (QNKKRKSSIE…ETRSDAETPF (351 aa)). The tract at residues 331–350 (SIESEDDLEEGDEEDEIGEK) is disordered. The segment covering 333–348 (ESEDDLEEGDEEDEIG) has biased composition (acidic residues). Ser-334 is modified (phosphoserine). Residues 373–674 (NATGQVMEKT…ETRSDAETPF (302 aa)) form the Protein kinase domain. Position 375 is a phosphothreonine (Thr-375). Ser-454 is modified (phosphoserine). The tract at residues 649–674 (LEENRPRNRSALYSPTETRSDAETPF) is disordered.

Belongs to the protein kinase superfamily.

Its subcellular location is the membrane. Does not seem to have conserved a kinase activity. The polypeptide is Putative kinase-like protein TMKL1 (TMKL1) (Arabidopsis thaliana (Mouse-ear cress)).